The sequence spans 402 residues: Deoxyguanosinetriphosphate triphosphohydrolase-like protein (402 aa).

The disordered stretch occupies residues 20–39 (PAFSRGRLVPEPESPTRTPF). Residues 73–217 (RLTHTIEVAQ…AAIADDIAYN (145 aa)) enclose the HD domain.

Belongs to the dGTPase family. Type 2 subfamily.

The chain is Deoxyguanosinetriphosphate triphosphohydrolase-like protein from Brucella canis (strain ATCC 23365 / NCTC 10854 / RM-666).